Consider the following 70-residue polypeptide: Large ribosomal subunit protein uL29 (70 aa).

The protein belongs to the universal ribosomal protein uL29 family.

In Symbiobacterium thermophilum (strain DSM 24528 / JCM 14929 / IAM 14863 / T), this protein is Large ribosomal subunit protein uL29.